A 327-amino-acid chain; its full sequence is Cell division protein ZipA (327 aa).

At 1–5 the chain is on the periplasmic side; sequence MQDLR. The chain crosses the membrane as a helical span at residues 6 to 26; it reads LILIVVGAIAIIALLLHGLWT. The Cytoplasmic portion of the chain corresponds to 27-327; sequence SRKERSSLFR…REVLDANTIA (301 aa). Basic and acidic residues predominate over residues 60–71; sequence GEVRVRTSHPQE. The disordered stretch occupies residues 60–182; it reads GEVRVRTSHP…EPVAPAPEAK (123 aa). Polar residues-rich tracts occupy residues 94–103 and 163–173; these read KSAQVKTASR and APQQHVESQQE.

Belongs to the ZipA family. Interacts with FtsZ via their C-terminal domains.

The protein resides in the cell inner membrane. In terms of biological role, essential cell division protein that stabilizes the FtsZ protofilaments by cross-linking them and that serves as a cytoplasmic membrane anchor for the Z ring. Also required for the recruitment to the septal ring of downstream cell division proteins. The polypeptide is Cell division protein ZipA (Yersinia pseudotuberculosis serotype O:1b (strain IP 31758)).